Reading from the N-terminus, the 498-residue chain is Zinc finger protein 497 (498 aa).

Residues 30-104 form a disordered region; it reads SEGAVSGGWG…LRPSPLPEEP (75 aa). 14 C2H2-type zinc fingers span residues 106 to 128, 134 to 156, 162 to 184, 190 to 212, 218 to 240, 246 to 268, 274 to 296, 302 to 324, 330 to 352, 358 to 380, 386 to 408, 414 to 436, 442 to 464, and 470 to 492; these read CRCG…RRVH, YTCP…QRIH, YACR…QETH, FRCP…RRTH, YECP…RRVH, HACR…LKIH, HACP…RRTH, FPCA…QRTH, FECA…RRVH, HACA…RRTH, FACA…RLSH, FACA…QRLH, FVCA…RRTH, and YACG…QKRH.

It belongs to the krueppel C2H2-type zinc-finger protein family.

It localises to the nucleus. Functionally, may be involved in transcriptional regulation. The polypeptide is Zinc finger protein 497 (ZNF497) (Homo sapiens (Human)).